A 141-amino-acid chain; its full sequence is Nucleoside diphosphate kinase (141 aa).

Lys-9, Phe-57, Arg-85, Thr-91, Arg-102, and Asn-112 together coordinate ATP. Residue His-115 is the Pros-phosphohistidine intermediate of the active site.

This sequence belongs to the NDK family. As to quaternary structure, homotetramer. The cofactor is Mg(2+).

The protein resides in the cytoplasm. It carries out the reaction a 2'-deoxyribonucleoside 5'-diphosphate + ATP = a 2'-deoxyribonucleoside 5'-triphosphate + ADP. The catalysed reaction is a ribonucleoside 5'-diphosphate + ATP = a ribonucleoside 5'-triphosphate + ADP. Major role in the synthesis of nucleoside triphosphates other than ATP. The ATP gamma phosphate is transferred to the NDP beta phosphate via a ping-pong mechanism, using a phosphorylated active-site intermediate. This Chlamydia trachomatis serovar L2 (strain ATCC VR-902B / DSM 19102 / 434/Bu) protein is Nucleoside diphosphate kinase.